Reading from the N-terminus, the 89-residue chain is Protein YxiC (89 aa).

The protein is Protein YxiC (yxiC) of Bacillus subtilis (strain 168).